Consider the following 807-residue polypeptide: Glycerol-3-phosphate acyltransferase (807 aa).

The HXXXXD motif signature appears at 308-313 (CHRSHM).

It belongs to the GPAT/DAPAT family.

The protein localises to the cell inner membrane. The enzyme catalyses sn-glycerol 3-phosphate + an acyl-CoA = a 1-acyl-sn-glycero-3-phosphate + CoA. Its pathway is phospholipid metabolism; CDP-diacylglycerol biosynthesis; CDP-diacylglycerol from sn-glycerol 3-phosphate: step 1/3. This Shewanella frigidimarina (strain NCIMB 400) protein is Glycerol-3-phosphate acyltransferase.